A 449-amino-acid polypeptide reads, in one-letter code: Mitochondrial distribution and morphology protein 10 (449 aa).

Disordered regions lie at residues 215–244 (GPSE…DEED) and 282–307 (DATP…GAPS). Positions 285–301 (PPSFQLPSSSPTQPSLL) are enriched in low complexity.

The protein belongs to the MDM10 family. Component of the ER-mitochondria encounter structure (ERMES) or MDM complex, composed of MMM1, MDM10, MDM12 and MDM34. Associates with the mitochondrial outer membrane sorting assembly machinery SAM(core) complex.

It localises to the mitochondrion outer membrane. Its function is as follows. Component of the ERMES/MDM complex, which serves as a molecular tether to connect the endoplasmic reticulum and mitochondria. Components of this complex are involved in the control of mitochondrial shape and protein biogenesis and may function in phospholipid exchange. MDM10 is involved in the late assembly steps of the general translocase of the mitochondrial outer membrane (TOM complex). Functions in the TOM40-specific route of the assembly of outer membrane beta-barrel proteins, including the association of TOM40 with the receptor TOM22 and small TOM proteins. Can associate with the SAM(core) complex as well as the MDM12-MMM1 complex, both involved in late steps of the major beta-barrel assembly pathway, that is responsible for biogenesis of all outer membrane beta-barrel proteins. May act as a switch that shuttles between both complexes and channels precursor proteins into the TOM40-specific pathway. Plays a role in mitochondrial morphology and in the inheritance of mitochondria. The sequence is that of Mitochondrial distribution and morphology protein 10 from Postia placenta (strain ATCC 44394 / Madison 698-R) (Brown rot fungus).